A 167-amino-acid polypeptide reads, in one-letter code: Ribosome-binding factor A (167 aa).

Residues 122–167 (LAASAKHAGEADPYKGDSPEDIDEDDFDEEDTDLSGDNDLDEDANR) form a disordered region. Over residues 128–139 (HAGEADPYKGDS) the composition is skewed to basic and acidic residues. Positions 140 to 167 (PEDIDEDDFDEEDTDLSGDNDLDEDANR) are enriched in acidic residues.

This sequence belongs to the RbfA family. As to quaternary structure, monomer. Binds 30S ribosomal subunits, but not 50S ribosomal subunits or 70S ribosomes.

The protein localises to the cytoplasm. Its function is as follows. One of several proteins that assist in the late maturation steps of the functional core of the 30S ribosomal subunit. Associates with free 30S ribosomal subunits (but not with 30S subunits that are part of 70S ribosomes or polysomes). Required for efficient processing of 16S rRNA. May interact with the 5'-terminal helix region of 16S rRNA. The chain is Ribosome-binding factor A from Paenarthrobacter aurescens (strain TC1).